Reading from the N-terminus, the 382-residue chain is PqqA peptide cyclase (382 aa).

The 216-residue stretch at 8–223 (VKPPLWLLAE…VHRYREKMAA (216 aa)) folds into the Radical SAM core domain. Positions 22, 26, and 29 each coordinate [4Fe-4S] cluster.

It belongs to the radical SAM superfamily. PqqE family. Interacts with PqqD. The interaction is necessary for activity of PqqE. [4Fe-4S] cluster is required as a cofactor.

The enzyme catalyses [PQQ precursor protein] + S-adenosyl-L-methionine = E-Y cross-linked-[PQQ precursor protein] + 5'-deoxyadenosine + L-methionine + H(+). The protein operates within cofactor biosynthesis; pyrroloquinoline quinone biosynthesis. Functionally, catalyzes the cross-linking of a glutamate residue and a tyrosine residue in the PqqA protein as part of the biosynthesis of pyrroloquinoline quinone (PQQ). The sequence is that of PqqA peptide cyclase from Erwinia tasmaniensis (strain DSM 17950 / CFBP 7177 / CIP 109463 / NCPPB 4357 / Et1/99).